A 220-amino-acid chain; its full sequence is MGISRDSMHKRRATGGKQKAWRKKRKYELGRQPANTKLSSNKTVRRVRVRGGNVKWRALRLDTGNYSWGSEAVTRKTRILDVVYNASNNELVRTQTLVKSAIVQVDAAPFKQWYLTHYGVDIGRKKKAPAAKKDAEGQDAEATTEEAKKSNHVVRKLEKRQQGRTLDAHIEEQFGSGRLLACISSRPGQCGRADGYILEGKELEFYMKKLQRKKGKGASA.

2 disordered regions span residues 1–41 (MGIS…LSSN) and 131–151 (AKKD…KKSN). The segment covering 8–26 (MHKRRATGGKQKAWRKKRK) has biased composition (basic residues).

The protein belongs to the eukaryotic ribosomal protein eS8 family.

This Oryza sativa subsp. japonica (Rice) protein is Small ribosomal subunit protein eS8 (RPS8).